The primary structure comprises 66 residues: Putative inactive (E)-beta-ocimene synthase, chloroplastic (66 aa).

A chloroplast-targeting transit peptide spans 1 to 25; that stretch reads MAAHNLCFNSAFVCNVHHQKTQHFP.

The protein belongs to the terpene synthase family. Tpsb subfamily. In terms of tissue distribution, expressed exclusively in flowers.

The protein localises to the plastid. Its subcellular location is the chloroplast. The chain is Putative inactive (E)-beta-ocimene synthase, chloroplastic (TPS02) from Arabidopsis thaliana (Mouse-ear cress).